The chain runs to 437 residues: tRNA-2-methylthio-N(6)-dimethylallyladenosine synthase (437 aa).

Residues 1 to 117 (MKFYIKTFGC…LPNLLEEAKS (117 aa)) enclose the MTTase N-terminal domain. Residues Cys10, Cys46, Cys80, Cys156, Cys160, and Cys163 each contribute to the [4Fe-4S] cluster site. The Radical SAM core domain maps to 142–371 (RENKYTAFVT…INLQKDITFK (230 aa)). In terms of domain architecture, TRAM spans 374–435 (LEYQDKIVEI…RFSLEGSIIG (62 aa)).

This sequence belongs to the methylthiotransferase family. MiaB subfamily. As to quaternary structure, monomer. [4Fe-4S] cluster is required as a cofactor.

It is found in the cytoplasm. The catalysed reaction is N(6)-dimethylallyladenosine(37) in tRNA + (sulfur carrier)-SH + AH2 + 2 S-adenosyl-L-methionine = 2-methylsulfanyl-N(6)-dimethylallyladenosine(37) in tRNA + (sulfur carrier)-H + 5'-deoxyadenosine + L-methionine + A + S-adenosyl-L-homocysteine + 2 H(+). In terms of biological role, catalyzes the methylthiolation of N6-(dimethylallyl)adenosine (i(6)A), leading to the formation of 2-methylthio-N6-(dimethylallyl)adenosine (ms(2)i(6)A) at position 37 in tRNAs that read codons beginning with uridine. This is tRNA-2-methylthio-N(6)-dimethylallyladenosine synthase from Sulfurihydrogenibium sp. (strain YO3AOP1).